Reading from the N-terminus, the 175-residue chain is Probable chemoreceptor glutamine deamidase CheD (175 aa).

Belongs to the CheD family.

It carries out the reaction L-glutaminyl-[protein] + H2O = L-glutamyl-[protein] + NH4(+). Probably deamidates glutamine residues to glutamate on methyl-accepting chemotaxis receptors (MCPs), playing an important role in chemotaxis. The chain is Probable chemoreceptor glutamine deamidase CheD from Jannaschia sp. (strain CCS1).